The chain runs to 363 residues: Early boundary activity protein 1 (363 aa).

Positions 155–168 are enriched in basic and acidic residues; the sequence is MDQEPEHKQSHEQD. The disordered stretch occupies residues 155-242; sequence MDQEPEHKQS…NAKRRCPGFE (88 aa). The span at 198–209 shows a compositional bias: acidic residues; the sequence is EDLGLDDDDEDY. Residues 255-354 enclose the BEN domain; sequence GPNGTEVSRI…TKCADENKML (100 aa).

The heterotrimeric Elba complex consists of Elba1, Elba2 and Elba3.

It is found in the nucleus. In terms of biological role, the heterotrimeric Elba complex is required for chromatin domain boundary function during early embryogenesis. It binds to a 8-bp sequence 5'-CCAATAAG-3' in the Fab-7 insulator or boundary element in the bithorax complex and contributes to its insulator or boundary activity. Elba1 may act as a transcriptional repressor and binds the palindromic sequence 5'-CCAATTGG-3' to mediate transcriptional repression. This Drosophila melanogaster (Fruit fly) protein is Early boundary activity protein 1.